Reading from the N-terminus, the 260-residue chain is Indole-3-glycerol phosphate synthase (260 aa).

This sequence belongs to the TrpC family.

It catalyses the reaction 1-(2-carboxyphenylamino)-1-deoxy-D-ribulose 5-phosphate + H(+) = (1S,2R)-1-C-(indol-3-yl)glycerol 3-phosphate + CO2 + H2O. Its pathway is amino-acid biosynthesis; L-tryptophan biosynthesis; L-tryptophan from chorismate: step 4/5. In Acetivibrio thermocellus (strain ATCC 27405 / DSM 1237 / JCM 9322 / NBRC 103400 / NCIMB 10682 / NRRL B-4536 / VPI 7372) (Clostridium thermocellum), this protein is Indole-3-glycerol phosphate synthase.